A 328-amino-acid polypeptide reads, in one-letter code: Malate dehydrogenase (328 aa).

Residue 11–17 (GAAGQIG) participates in NAD(+) binding. Substrate contacts are provided by Arg92 and Arg98. Residues Asn105, Gln112, and 129–131 (VGN) each bind NAD(+). Substrate contacts are provided by Asn131 and Arg162. His187 acts as the Proton acceptor in catalysis.

The protein belongs to the LDH/MDH superfamily. MDH type 2 family.

It catalyses the reaction (S)-malate + NAD(+) = oxaloacetate + NADH + H(+). Functionally, catalyzes the reversible oxidation of malate to oxaloacetate. This Coxiella burnetii (strain CbuG_Q212) (Coxiella burnetii (strain Q212)) protein is Malate dehydrogenase.